The chain runs to 443 residues: Phenylalanine--tRNA ligase alpha subunit (443 aa).

Residues T332, 375-377 (QVE), and Y415 each bind L-phenylalanine. E417 provides a ligand contact to Mg(2+). Residue F441 participates in L-phenylalanine binding.

It belongs to the class-II aminoacyl-tRNA synthetase family. Phe-tRNA synthetase alpha subunit type 2 subfamily. In terms of assembly, heterotetramer; dimer of two heterodimers formed by FARSA and FARSB. It depends on Mg(2+) as a cofactor.

It is found in the cytoplasm. It catalyses the reaction tRNA(Phe) + L-phenylalanine + ATP = L-phenylalanyl-tRNA(Phe) + AMP + diphosphate + H(+). The chain is Phenylalanine--tRNA ligase alpha subunit (FARSA) from Gallus gallus (Chicken).